A 219-amino-acid polypeptide reads, in one-letter code: Alpha N-terminal protein methyltransferase 1 (219 aa).

S-adenosyl-L-methionine is bound by residues Gly64, Arg69, 111–112, and Gln127; that span reads LQ.

Belongs to the methyltransferase superfamily. NTM1 family.

The protein resides in the cytoplasm. It catalyses the reaction N-terminal L-alanyl-L-prolyl-L-lysyl-[protein] + 3 S-adenosyl-L-methionine = N-terminal N,N,N-trimethyl-L-alanyl-L-prolyl-L-lysyl-[protein] + 3 S-adenosyl-L-homocysteine + 3 H(+). It carries out the reaction N-terminal L-seryl-L-prolyl-L-lysyl-[protein] + 3 S-adenosyl-L-methionine = N-terminal N,N,N-trimethyl-L-seryl-L-prolyl-L-lysyl-[protein] + 3 S-adenosyl-L-homocysteine + 3 H(+). The enzyme catalyses N-terminal L-prolyl-L-prolyl-L-lysyl-[protein] + 2 S-adenosyl-L-methionine = N-terminal N,N-dimethyl-L-prolyl-L-prolyl-L-lysyl-[protein] + 2 S-adenosyl-L-homocysteine + 2 H(+). In terms of biological role, alpha-N-methyltransferase that methylates the N-terminus of target proteins containing the N-terminal motif [Ala/Pro/Ser]-Pro-Lys when the initiator Met is cleaved. Specifically catalyzes mono-, di- or tri-methylation of exposed alpha-amino group of Ala or Ser residue in the [Ala/Ser]-Pro-Lys motif and mono- or di-methylation of Pro in the Pro-Pro-Lys motif. This chain is Alpha N-terminal protein methyltransferase 1 (tae1), found in Schizosaccharomyces pombe (strain 972 / ATCC 24843) (Fission yeast).